We begin with the raw amino-acid sequence, 1147 residues long: Tip elongation aberrant protein 1 (1147 aa).

Basic residues predominate over residues 1–16 (MSFLFKRNKGSAHKPT). The segment at 1-64 (MSFLFKRNKG…TGSGSHITAS (64 aa)) is disordered. Polar residues predominate over residues 18–32 (PNFSKTSTTPSTSQL). Kelch repeat units lie at residues 94–144 (EIYI…LIGN), 146–198 (FIVF…CLGS), 199–253 (KICL…TFSD), 254–303 (KLYI…VVEG), 305–351 (LYVF…TLSC), and 355–402 (TLVL…SNST). 2 disordered regions span residues 384–403 (SVPT…NSTG) and 408–547 (SAFN…NAQS). Composition is skewed to polar residues over residues 385-403 (VPTT…NSTG), 408-465 (SAFN…SNDL), and 472-489 (TRSN…LNSH). The span at 502-512 (SSLNSQQLSNQ) shows a compositional bias: low complexity. Ser503 bears the Phosphoserine mark. Positions 519–547 (VSPTLSFVPSSHSMEQGNGSVASANNAQS) are enriched in polar residues. Positions 538–1147 (SVASANNAQS…AKEPVHDNEN (610 aa)) are interaction with tea4. Coiled-coil stretches lie at residues 611–649 (KLYE…LEKV), 716–838 (QTSS…IIDA), 879–990 (KNNE…ALEE), and 1084–1105 (IKSL…AKEK). Residues 948-1147 (KALEQRNTGA…AKEPVHDNEN (200 aa)) are retention at microtubule cell ends.

Major component of the tea1 cell-end complex. Interacts with rax2, tea4 and tip1. Interacts with for3 in the presence of tea4.

The protein resides in the cytoplasm. Its subcellular location is the cytoskeleton. Functionally, cell polarity protein. Acts as an end marker, directing the growth machinery to the cell poles. Involved in the regulation of microtubular organization, affecting the maintenance of a single central axis. Prevents the curling of microtubule tips around the cell ends and is required for the retention of polarity factors such as pom1, tip1 and tea2 at the cell ends, necessary for the cell to grow in a straight line. Links tip1 and tea4 in a common complex. The sequence is that of Tip elongation aberrant protein 1 (tea1) from Schizosaccharomyces pombe (strain 972 / ATCC 24843) (Fission yeast).